A 164-amino-acid polypeptide reads, in one-letter code: DNA-directed RNA polymerase 19 kDa subunit (164 aa).

Acidic residues predominate over residues 1-35; it reads MADTDDIIDYESDDLTEYEDDEEEEEDGESLETSD. Residues 1–39 form a disordered region; sequence MADTDDIIDYESDDLTEYEDDEEEEEDGESLETSDIDPK.

It belongs to the poxviridae DNA-directed RNA polymerase 19 kDa subunit family. In terms of assembly, the DNA-dependent RNA polymerase used for intermediate and late genes expression consists of eight subunits Rpo30/OPG66, Rpo7/OPG90, Rpo22/OPG103, Rpo147/OPG105, Rpo18/OPG119, Rpo19/OPG131, Rpo132/OPG151 and Rpo35/OPG156. The same holoenzyme, with the addition of the transcription-specificity factor OPG109, is used for early gene expression.

It localises to the virion. The enzyme catalyses RNA(n) + a ribonucleoside 5'-triphosphate = RNA(n+1) + diphosphate. Its function is as follows. Part of the DNA-dependent RNA polymerase which catalyzes the transcription of viral DNA into RNA using the four ribonucleoside triphosphates as substrates. Responsible for the transcription of early, intermediate and late genes. DNA-dependent RNA polymerase associates with the early transcription factor (ETF), itself composed of OPG118 and OPG133, thereby allowing the early genes transcription. Late transcription, and probably also intermediate transcription, require newly synthesized RNA polymerase. This Homo sapiens (Human) protein is DNA-directed RNA polymerase 19 kDa subunit (OPG131).